We begin with the raw amino-acid sequence, 359 residues long: Alanine racemase, biosynthetic (359 aa).

The Proton acceptor; specific for D-alanine role is filled by lysine 34. Lysine 34 is modified (N6-(pyridoxal phosphate)lysine). A substrate-binding site is contributed by arginine 129. Residue tyrosine 255 is the Proton acceptor; specific for L-alanine of the active site. Methionine 303 is a substrate binding site.

The protein belongs to the alanine racemase family. As to quaternary structure, monomer but homodimer in the presence of the substrate. Pyridoxal 5'-phosphate serves as cofactor.

The catalysed reaction is L-alanine = D-alanine. It participates in amino-acid biosynthesis; D-alanine biosynthesis; D-alanine from L-alanine: step 1/1. It functions in the pathway cell wall biogenesis; peptidoglycan biosynthesis. Functionally, catalyzes the interconversion of L-alanine and D-alanine. In Shigella dysenteriae, this protein is Alanine racemase, biosynthetic (alr).